A 195-amino-acid polypeptide reads, in one-letter code: Putative C-P lyase subunit protein HtxG (195 aa).

Belongs to the PhnH family.

In terms of biological role, belongs to an operon involved in hypophosphite oxidation. Exact function not known. The polypeptide is Putative C-P lyase subunit protein HtxG (htxG) (Stutzerimonas stutzeri (Pseudomonas stutzeri)).